Reading from the N-terminus, the 264-residue chain is MKAVVLAVALVFLTGSQAWHVWQQDEPQSRWDKVKDFATVYVDAVKDSGRDYVSQFESSSLGKQLNLNLLENWDTLGTTVGQLQERLGPLTRDFWDNLEKETDWLRQEMNKDLEEVKQNVQPYLDEFQKKWNEDVELYRQRVAPLGAELHESARQKLQELQGKLSPVAEEFRDRMRTHVDALRTQLAPHSDKLRESLAQRLAELKSNPTLNEYHTRAKTHLNTFGEKARPALEDLRHTLIPILDTLKTKVKSVIDKARETLTAQ.

Positions 1–18 (MKAVVLAVALVFLTGSQA) are cleaved as a signal peptide. 2 repeat units span residues 67-88 (LNLLENWDTLGTTVGQLQERLG) and 89-110 (PLTRDFWDNLEKETDWLRQEMN). The segment at 67–264 (LNLLENWDTL…DKARETLTAQ (198 aa)) is 10 X approximate tandem repeats. Methionine 109 bears the Methionine sulfoxide mark. A 3; half-length repeat occupies 111-121 (KDLEEVKQNVQ). 3 tandem repeats follow at residues 122 to 143 (PYLDEFQKKWNEDVELYRQRVA), 144 to 165 (PLGAELHESARQKLQELQGKLS), and 166 to 187 (PVAEEFRDRMRTHVDALRTQLA). Residues 188 to 207 (PHSDKLRESLAQRLAELKSN) form a 7; truncated repeat. Copy 8 of the repeat occupies 208 to 229 (PTLNEYHTRAKTHLNTFGEKAR). The stretch at 230 to 240 (PALEDLRHTLI) is one 9; half-length repeat. Repeat unit 10 spans residues 241–264 (PILDTLKTKVKSVIDKARETLTAQ).

Belongs to the apolipoprotein A1/A4/E family. As to quaternary structure, homodimer. Interacts with APOA1BP and CLU. Component of a sperm activating protein complex (SPAP), consisting of APOA1, an immunoglobulin heavy chain, an immunoglobulin light chain and albumin. Interacts with NDRG1. Interacts with SCGB3A2. Interacts with NAXE and YJEFN3. Glycosylated. In terms of processing, palmitoylated. Post-translationally, phosphorylation sites are present in the extracellular medium.

Its subcellular location is the secreted. Participates in the reverse transport of cholesterol from tissues to the liver for excretion by promoting cholesterol efflux from tissues and by acting as a cofactor for the lecithin cholesterol acyltransferase (LCAT). As part of the SPAP complex, activates spermatozoa motility. In Mus pahari (Gairdner's shrew-mouse), this protein is Apolipoprotein A-I (Apoa1).